Reading from the N-terminus, the 202-residue chain is MCNCGSSGEKPTFNDRKSTSYEHLFKYIMVGDSAVGKSNLLLQFVDKRFAPNSDFTIGVEFGSRSININDKQIKLQIWDTAGQEKFRSITRAYYRGAVCAMIVYDITRRDSFESLNSWLTDCRKFSSCDVTTVLIGNKADLEANRQVSTSEAKEFAEKNGLMFFETSAKTALNVDEAFEKSTEQILKKLESNPGLLSNEGNN.

Position 31-38 (31-38 (GDSAVGKS)) interacts with GTP. Positions 53–61 (SDFTIGVEF) match the Effector region motif. GTP contacts are provided by residues 79–83 (DTAGQ) and 137–140 (NKAD).

The protein belongs to the small GTPase superfamily. Rab family. Post-translationally, this sequence lacks the C-terminal cysteine motifs subject to isoprenylation in other Rab proteins.

This is Ras-related protein Rab-2B (rab2B) from Dictyostelium discoideum (Social amoeba).